We begin with the raw amino-acid sequence, 70 residues long: Large ribosomal subunit protein eL38 (70 aa).

Belongs to the eukaryotic ribosomal protein eL38 family.

The polypeptide is Large ribosomal subunit protein eL38 (RPL38) (Branchiostoma belcheri (Amphioxus)).